A 693-amino-acid polypeptide reads, in one-letter code: MAREFSLEKTRNIGIMAHVDAGKTTTTERILYYTGKIHKIGETHEGASQMDWMEQEQERGITITSAATTAQWNNHRVNIIDTPGHVDFTIEVQRSLRVLDGAVTVLDSQSGVEPQTETVWRQATEYGVPRIVFANKMDKIGADFLYSVSTLHDRLQANAHPIQLPIGSEDDFRGIIDLIKMKAEIYTNDLGTDILEEDIPAEYLDQAQEYREKLVEAVAETDEDLMMKYLEGEEITNEELKAGIRKATINVEFFPVLCGSAFKNKGVQLMLDAVIDYLPSPLDIPAIKGINPDTDEEETRPASDEEPFAALAFKIMTDPFVGRLTFFRVYSGVLQSGSYVLNTSKGKRERIGRILQMHANSRQEIDTVYSGDIAAAVGLKDTTTGDSLTDEKAKIILESINVPEPVIQLMVEPKSKADQDKMGIALQKLAEEDPTFRVETNVETGETVISGMGELHLDVLVDRMRREFKVEANVGAPQVSYRETFRASTQARGFFKRQSGGKGQFGDVWIEFTPNEEGKGFEFENAIVGGVVPREFIPAVEKGLVESMANGVLAGYPMVDVKAKLYDGSYHDVDSSETAFKIAASLALKEAAKSAQPAILEPMMLVTITVPEENLGDVMGHVTARRGRVDGMEAHGNSQIVRAYVPLAEMFGYATVLRSASQGRGTFMMVFDHYEDVPKSVQEEIIKKNKGED.

One can recognise a tr-type G domain in the interval 8–282 (EKTRNIGIMA…AVIDYLPSPL (275 aa)). Residues 17-24 (AHVDAGKT), 81-85 (DTPGH), and 135-138 (NKMD) contribute to the GTP site.

This sequence belongs to the TRAFAC class translation factor GTPase superfamily. Classic translation factor GTPase family. EF-G/EF-2 subfamily.

Its subcellular location is the cytoplasm. In terms of biological role, catalyzes the GTP-dependent ribosomal translocation step during translation elongation. During this step, the ribosome changes from the pre-translocational (PRE) to the post-translocational (POST) state as the newly formed A-site-bound peptidyl-tRNA and P-site-bound deacylated tRNA move to the P and E sites, respectively. Catalyzes the coordinated movement of the two tRNA molecules, the mRNA and conformational changes in the ribosome. This chain is Elongation factor G, found in Streptococcus pneumoniae (strain Hungary19A-6).